Here is a 325-residue protein sequence, read N- to C-terminus: GMP reductase (325 aa).

C174 acts as the Thioimidate intermediate in catalysis. 203-226 (LIADGGIRTHGDIAKSIRFGASMV) is an NADP(+) binding site.

Belongs to the IMPDH/GMPR family. GuaC type 2 subfamily.

It catalyses the reaction IMP + NH4(+) + NADP(+) = GMP + NADPH + 2 H(+). Catalyzes the irreversible NADPH-dependent deamination of GMP to IMP. It functions in the conversion of nucleobase, nucleoside and nucleotide derivatives of G to A nucleotides, and in maintaining the intracellular balance of A and G nucleotides. The sequence is that of GMP reductase from Staphylococcus aureus (strain bovine RF122 / ET3-1).